Consider the following 251-residue polypeptide: Imidazole glycerol phosphate synthase subunit HisF (251 aa).

Active-site residues include Asp-11 and Asp-130.

The protein belongs to the HisA/HisF family. Heterodimer of HisH and HisF.

The protein localises to the cytoplasm. The enzyme catalyses 5-[(5-phospho-1-deoxy-D-ribulos-1-ylimino)methylamino]-1-(5-phospho-beta-D-ribosyl)imidazole-4-carboxamide + L-glutamine = D-erythro-1-(imidazol-4-yl)glycerol 3-phosphate + 5-amino-1-(5-phospho-beta-D-ribosyl)imidazole-4-carboxamide + L-glutamate + H(+). It participates in amino-acid biosynthesis; L-histidine biosynthesis; L-histidine from 5-phospho-alpha-D-ribose 1-diphosphate: step 5/9. In terms of biological role, IGPS catalyzes the conversion of PRFAR and glutamine to IGP, AICAR and glutamate. The HisF subunit catalyzes the cyclization activity that produces IGP and AICAR from PRFAR using the ammonia provided by the HisH subunit. This chain is Imidazole glycerol phosphate synthase subunit HisF, found in Chlorobium phaeobacteroides (strain DSM 266 / SMG 266 / 2430).